A 1014-amino-acid polypeptide reads, in one-letter code: Resistance to glucose repression protein 1 (1014 aa).

The segment at methionine 1 to phenylalanine 63 is disordered. Serine 2 is subject to N-acetylserine. The segment covering glycine 11 to valine 34 has biased composition (basic and acidic residues). Threonine 73 carries the phosphothreonine modification. Serine 75 is modified (phosphoserine). Disordered regions lie at residues leucine 90 to proline 144 and serine 236 to lysine 270. The segment covering tyrosine 104–serine 115 has biased composition (low complexity). Serine 242 and serine 254 each carry phosphoserine. Basic and acidic residues predominate over residues aspartate 247–lysine 260. The Nuclear localization signal motif lies at lysine 277–arginine 283. Serine 311 is modified (phosphoserine). Residues tyrosine 340–asparagine 463 are disordered. Composition is skewed to polar residues over residues glutamate 343–serine 352, serine 361–asparagine 370, histidine 389–serine 407, and leucine 415–glutamate 455. A Phosphoserine modification is found at serine 421. Phosphotyrosine is present on tyrosine 480. Serine 490 carries the phosphoserine modification. 2 disordered regions span residues glutamate 531–histidine 557 and serine 570–arginine 591. Serine 570, serine 572, and serine 576 each carry phosphoserine. Positions isoleucine 578 to arginine 591 are enriched in polar residues. Residues arginine 595 to lysine 599 carry the Nuclear localization signal motif. Phosphoserine occurs at positions 610, 614, and 680. The disordered stretch occupies residues serine 690–proline 897. The segment covering tyrosine 722 to serine 740 has biased composition (low complexity). Residues serine 741–histidine 758 are compositionally biased toward acidic residues. Composition is skewed to polar residues over residues leucine 770–glycine 802 and arginine 822–serine 833. The Nuclear localization signal signature appears at lysine 873–lysine 879. A compositionally biased stretch (polar residues) spans serine 884–proline 897. Phosphothreonine is present on threonine 896. Serine 898 bears the Phosphoserine mark. Residues lysine 959–serine 972 show a composition bias toward basic and acidic residues. Residues lysine 959 to histidine 982 are disordered. Serine 980 carries the phosphoserine modification.

Interacts with SAK1.

Its subcellular location is the nucleus. In terms of biological role, involved in RNA processing and negative regulation of glucose repression. Regulates the level of two antigens, P43 and P70. Binds to protein phosphatase type 1. Functions with REG2 and SNF1 protein kinase to regulate growth. Might regulate SNF1 directly or indirectly. This is Resistance to glucose repression protein 1 (REG1) from Saccharomyces cerevisiae (strain ATCC 204508 / S288c) (Baker's yeast).